We begin with the raw amino-acid sequence, 754 residues long: LON peptidase N-terminal domain and RING finger protein 2 (754 aa).

2 TPR repeats span residues 23-58 (IAQR…QPDR) and 59-91 (GLCL…GALR). The segment at 112–136 (PLSAENPGGEPEAPGEGGPAPEPRA) is disordered. Low complexity predominate over residues 115–125 (AENPGGEPEAP). TPR repeat units lie at residues 197–230 (LRRL…APDD), 231–264 (NSLL…EPLL), and 266–298 (KGHQ…NPEC). Residues 398 to 439 (GLKRQFPDDVEDAPDLNAPGKIPKKDLSLQRSPNSETEESQG) are disordered. Residues 426-439 (LQRSPNSETEESQG) are compositionally biased toward polar residues. A TPR 6 repeat occupies 447–483 (FECALCMRLLFEPVTTPCGHTFCLKCLERCLDHAPHC). The RING-type zinc finger occupies 449-487 (CALCMRLLFEPVTTPCGHTFCLKCLERCLDHAPHCPLCK). The Lon N-terminal domain maps to 528–737 (MSELSNLTRD…AIRRILVIIT (210 aa)).

The chain is LON peptidase N-terminal domain and RING finger protein 2 (LONRF2) from Homo sapiens (Human).